Consider the following 344-residue polypeptide: Methionine import ATP-binding protein MetN (344 aa).

The ABC transporter domain maps to 2–241; it reads IELQGLSQRF…PQHEVTRAMI (240 aa). 38 to 45 lines the ATP pocket; sequence GRSGAGKS.

This sequence belongs to the ABC transporter superfamily. Methionine importer (TC 3.A.1.24) family. The complex is composed of two ATP-binding proteins (MetN), two transmembrane proteins (MetI) and a solute-binding protein (MetQ).

The protein resides in the cell inner membrane. The catalysed reaction is L-methionine(out) + ATP + H2O = L-methionine(in) + ADP + phosphate + H(+). The enzyme catalyses D-methionine(out) + ATP + H2O = D-methionine(in) + ADP + phosphate + H(+). Its function is as follows. Part of the ABC transporter complex MetNIQ involved in methionine import. Responsible for energy coupling to the transport system. This is Methionine import ATP-binding protein MetN from Cupriavidus metallidurans (strain ATCC 43123 / DSM 2839 / NBRC 102507 / CH34) (Ralstonia metallidurans).